Here is a 445-residue protein sequence, read N- to C-terminus: MAELKYISGFGNECSSEDPRCPGSLPEGQNNPQVCPYNLYAEQLSGSAFTCPRSTNKRSWLYRILPSVSHKPFESIDEGQVTHNWDEVDPDPNQLRWKPFEIPKASQKKVDFVSGLHTLCGAGDIKSNNGLAIHIFLCNTSMENRCFYNSDGDFLIVPQKGNLLIYTEFGKMLVQPNEICVIQRGMRFSIDVFEETRGYILEVYGVHFELPDLGPIGANGLANPRDFLIPIAWYEDRQVPGGYTVINKYQGKLFAAKQDVSPFNVVAWHGNYTPYKYNLKNFMVINSVAFDHADPSIFTVLTAKSVRPGVAIADFVIFPPRWGVADKTFRPPYYHRNCMSEFMGLIRGHYEAKQGGFLPGGGSLHSTMTPHGPDADCFEKASKVKLAPERIADGTMAFMFESSLSLAVTKWGLKASRCLDENYHKCWEPLKSHFTPNSRNPAEPN.

K98 bears the N6-acetyllysine mark. Positions 335, 341, and 371 each coordinate Fe cation. An N6-succinyllysine modification is found at K414.

This sequence belongs to the homogentisate dioxygenase family. As to quaternary structure, homohexamer arranged as a dimer of trimers. Fe cation is required as a cofactor. Highest expression in the prostate, small intestine, colon, kidney and liver.

It catalyses the reaction homogentisate + O2 = 4-maleylacetoacetate + H(+). It participates in amino-acid degradation; L-phenylalanine degradation; acetoacetate and fumarate from L-phenylalanine: step 4/6. Catalyzes the conversion of homogentisate to maleylacetoacetate. The protein is Homogentisate 1,2-dioxygenase (HGD) of Homo sapiens (Human).